Here is a 156-residue protein sequence, read N- to C-terminus: CASP-like protein 5C1 (156 aa).

At M1–Q24 the chain is on the cytoplasmic side. A helical membrane pass occupies residues A25 to T45. A46 is a topological domain (extracellular). A helical membrane pass occupies residues F47 to I67. The Cytoplasmic portion of the chain corresponds to D68–P81. The chain crosses the membrane as a helical span at residues G82–A102. Residues S103–A132 lie on the Extracellular side of the membrane. A helical transmembrane segment spans residues M133–I153. Over A154–R156 the chain is Cytoplasmic.

It belongs to the Casparian strip membrane proteins (CASP) family. As to quaternary structure, homodimer and heterodimers.

The protein localises to the cell membrane. This Oryza sativa subsp. indica (Rice) protein is CASP-like protein 5C1.